We begin with the raw amino-acid sequence, 469 residues long: Calcium-binding mitochondrial carrier protein SCaMC-2 (469 aa).

Residues 1 to 189 (MLCLCLYVPL…ERQTGMWWRH (189 aa)) are Mitochondrial intermembrane-facing. 3 EF-hand domains span residues 47–80 (TYRQ…QDHE), 78–113 (DHEK…LGVK), and 114–149 (ISEQ…HPVE). Residues Asp-60, Asp-62, Asp-64, Gln-66, and Glu-71 each coordinate Ca(2+). Solcar repeat units follow at residues 184-270 (GMWW…IKRL), 278-363 (LRIH…LKNA), and 375-463 (PGVF…LKIT). The chain crosses the membrane as a helical span at residues 190–207 (LVAGGGAGAVSRTCTAPL). The Mitochondrial matrix segment spans residues 208–244 (DRLKVLMQVHASRSNNMCIVGGFTQMIREGGARSLWR). A helical membrane pass occupies residues 245-264 (GNGINVLKIAPESAIKFMAY). At 265 to 287 (EQIKRLIGSDQETLRIHERLVAG) the chain is on the mitochondrial intermembrane side. The helical transmembrane segment at 288-301 (SLAGAIAQSSIYPM) threads the bilayer. Residues 302–337 (EVLKTRMALRKTGQYSGMLDCARKILAREGMAAFYK) are Mitochondrial matrix-facing. The helical transmembrane segment at 338-357 (GYVPNMLGIIPYAGIDLAVY) threads the bilayer. Residues 358–380 (ETLKNAWLQRYAVNSADPGVFVL) are Mitochondrial intermembrane-facing. The chain crosses the membrane as a helical span at residues 381-398 (LACGTMSSTCGQLASYPL). Topologically, residues 399-437 (ALVRTRMQAQASMEGAPEVTMSSLFKQILRTEGAFGLYR) are mitochondrial matrix. A helical transmembrane segment spans residues 438-457 (GLAPNFMKVIPAVSISYVVY). Residues 458–469 (ENLKITLGVQSR) are Mitochondrial intermembrane-facing.

It belongs to the mitochondrial carrier (TC 2.A.29) family.

It localises to the mitochondrion inner membrane. Its function is as follows. Calcium-dependent mitochondrial solute carrier. Mitochondrial solute carriers shuttle metabolites, nucleotides, and cofactors through the mitochondrial inner membrane. May act as a ATP-Mg/Pi exchanger that mediates the transport of Mg-ATP in exchange for phosphate, catalyzing the net uptake or efflux of adenine nucleotides into or from the mitochondria. The protein is Calcium-binding mitochondrial carrier protein SCaMC-2 (SLC25A25) of Bos taurus (Bovine).